A 167-amino-acid polypeptide reads, in one-letter code: Small ribosomal subunit protein uS7c (167 aa).

Belongs to the universal ribosomal protein uS7 family. Part of the 30S ribosomal subunit.

It localises to the plastid. It is found in the chloroplast. One of the primary rRNA binding proteins, it binds directly to 16S rRNA where it nucleates assembly of the head domain of the 30S subunit. This is Small ribosomal subunit protein uS7c (rps7) from Tetradesmus obliquus (Green alga).